The primary structure comprises 945 residues: Glutamyl aminopeptidase (945 aa).

Topologically, residues 1 to 18 (MNFAEEEPSKKYCIKGKH) are cytoplasmic. Residues 19–39 (VAIICATVVAVGLIVGLSVGL) traverse the membrane as a helical; Signal-anchor for type II membrane protein segment. At 40-945 (TRSCEPGTTP…SISEWFTSMP (906 aa)) the chain is on the extracellular side. The segment at 45 to 77 (PGTTPAPSNPPPHTSTALPPQDQNVCPDSDDES) is disordered. Asparagine 116 and asparagine 189 each carry an N-linked (GlcNAc...) asparagine glycan. Glutamate 215 is a substrate binding site. N-linked (GlcNAc...) asparagine glycans are attached at residues asparagine 236 and asparagine 316. Position 349 to 353 (349 to 353 (GAMEN)) interacts with substrate. Zn(2+) is bound at residue histidine 385. Glutamate 386 acts as the Proton acceptor in catalysis. Residues histidine 389 and glutamate 408 each contribute to the Zn(2+) site. Residues asparagine 546, asparagine 584, asparagine 601, asparagine 640, asparagine 669, asparagine 754, asparagine 766, and asparagine 792 are each glycosylated (N-linked (GlcNAc...) asparagine). Arginine 878 is a substrate binding site.

It belongs to the peptidase M1 family. Homodimer; disulfide-linked. The cofactor is Zn(2+). Highest expression in kidney proximal tubules and ileum enterocytes. High expression also detected in liver and pituitary. Lower levels in heart, adrenal gland and brain. Not detected in aorta, lung or spleen. In heart, higher levels in ventricle than in atrium. Also expressed in glomerular mesangial cells.

Its subcellular location is the cell membrane. The catalysed reaction is Release of N-terminal glutamate (and to a lesser extent aspartate) from a peptide.. With respect to regulation, substrate specificity is modulated by calcium which enhances the enzymatic activity for cleavage of acidic residues while reducing its activity with basic residues. Inhibited by aminopeptidase inhibitors amastatin and bestatin. Its function is as follows. Regulates central hypertension through its calcium-modulated preference to cleave N-terminal acidic residues from peptides such as angiotensin II. This chain is Glutamyl aminopeptidase (Enpep), found in Rattus norvegicus (Rat).